The primary structure comprises 44 residues: pyr operon leader peptide (44 aa).

The polypeptide is pyr operon leader peptide (pyrL) (Shigella flexneri).